The following is a 2191-amino-acid chain: FRAS1-related extracellular matrix protein 1 (2191 aa).

Residues 1–29 (MHSPGCTGPKAQWFLLLQLLLLHLDRVSA) form the signal peptide. A Cell attachment site motif is present at residues 205–207 (RGD). CSPG repeat units follow at residues 300–394 (VPRA…MELE), 419–506 (APRV…FRIF), and 527–621 (PPFL…FVLW). Asn-341 carries an N-linked (GlcNAc...) asparagine glycan. N-linked (GlcNAc...) asparagine glycosylation is found at Asn-566 and Asn-628. 3 CSPG repeats span residues 648–779 (KEAP…VSVS), 801–892 (QVPE…LEVT), and 912–1007 (EPPI…LVVS). Residue Asn-1039 is glycosylated (N-linked (GlcNAc...) asparagine). CSPG repeat units follow at residues 1049–1151 (PPSI…VYAT), 1172–1273 (EAPD…IQLS), 1294–1391 (TPTL…FYLW), 1412–1504 (GDIV…FTIS), 1525–1614 (LPVL…FLAT), and 1650–1742 (HLHS…FQAM). The N-linked (GlcNAc...) asparagine glycan is linked to Asn-1180. The N-linked (GlcNAc...) asparagine glycan is linked to Asn-1584. Positions 1749 to 1848 (ATPQSLDLRW…DDEVFEVILN (100 aa)) constitute a Calx-beta domain. Residues 1874–1921 (HPSNSFNQSKHSTWGKGPWHPLPSGSSSLTTSGSPLLERPPPSFTSGD) are disordered. The span at 1875-1885 (PSNSFNQSKHS) shows a compositional bias: polar residues. Low complexity predominate over residues 1895 to 1910 (LPSGSSSLTTSGSPLL). In terms of domain architecture, C-type lectin spans 2072-2186 (HSGYCHILVT…CSKGKAHNFV (115 aa)). An intrachain disulfide couples Cys-2163 to Cys-2177.

This sequence belongs to the FRAS1 family. Interacts with FREM2. Expressed in epidermis and hair follicles. Expressed in many developing epidermal appendages, including the whisker and sensory vibrissae, cranial and trunk hair follicles, meibomian glands, teeth, footpads, eyelash primordia and invaginating mammary glands. Limb expression localizes to sheets of dermal cells on the apical and basal surfaces of the digits but, unlike FRAS1, is excluded from the apical ectodermal ridge. Usually expressed at higher level in dermal cells underlying the differentiating epithelial components, especially underlying the epidermis of the head, limbs, and eyelids. Expression in the eyelid dermis is apparent as early as 13 dpc. Postnatal expression in the skin is limited to the dermal papillae. In the kidney, it is expressed from 12.5 dpc in the mesenchyme surrounding the branching ureteric tree, with a strong expression in the more proximal regions of these tubules rather than at the proliferating and branching ends of the ureteric buds. In hair follicle, it is selectively expressed in the vibrissal hair primordia during development. Preferentially expressed in the whisker pad epithelia of 12.5 dpc embryos, in both the epithelial and mesenchymal cells of developing hair follicles. In the early stages of hair follicle development (i.e. stages 0-1), it is expressed in both hair placodes and dermal condensations. In stage 2, it is detected in dermal condensations and adjacent epithelia, but not in the upper region of the hair follicles. Expressed at the tip of developing hair follicles in the later stages (i.e. stages 3-5).

Its subcellular location is the secreted. It localises to the extracellular space. The protein resides in the extracellular matrix. The protein localises to the basement membrane. In terms of biological role, extracellular matrix protein that plays a role in epidermal differentiation and is required for epidermal adhesion during embryonic development. The chain is FRAS1-related extracellular matrix protein 1 (Frem1) from Mus musculus (Mouse).